We begin with the raw amino-acid sequence, 928 residues long: Mitogen-activated protein kinase kinase kinase dlk-1 (928 aa).

Residues 1-72 (MTSTTMVTTL…GQKEGSPDPK (72 aa)) form a disordered region. The span at 42–52 (LVTQSAPNTPI) shows a compositional bias: polar residues. Residues 53–69 (QHREQANAEFGQKEGSP) show a composition bias toward basic and acidic residues. Residues 135-377 (ISELEWLGSG…FSHIRQHWEI (243 aa)) enclose the Protein kinase domain. Residues 141-149 (LGSGSQGAV) and K162 contribute to the ATP site. D246 serves as the catalytic Proton acceptor. The tract at residues 459-480 (LQGCFTELKLKESELAEWEKDL) is leucine-zipper. Disordered regions lie at residues 483 to 575 (REQW…DAIR), 644 to 696 (RRVS…PSRN), and 802 to 845 (ENAN…SMES). A compositionally biased stretch (acidic residues) spans 509–519 (GYDDMSSDEDV). Residues 530–557 (SNTSSSSGVQSSPFSRQSSSRSSAGQQT) are compositionally biased toward low complexity. The important for interaction between isoform a and isoform c stretch occupies residues 605–814 (SAGAGSCTAI…NDVDLTSSMD (210 aa)). Residues 647–656 (STSVNKSTAV) show a composition bias toward polar residues. The segment covering 677–695 (SCSSPRSSSKLNRSSYPSR) has biased composition (low complexity). Residues 823 to 833 (ADVESSEEDEG) are compositionally biased toward acidic residues. Phosphoserine is present on residues S874 and S878. Positions 874-879 (SDGLSD) match the SDGLSD hexapeptide motif.

The protein belongs to the protein kinase superfamily. STE Ser/Thr protein kinase family. MAP kinase kinase kinase subfamily. In terms of assembly, homooligomer (via leucine zipper domain and hexapeptide motif). Isoform a (via leucine zipper domain) forms a heterooligomer with isoform c (via leucine zipper domain). Isoform c does not self-associate. It depends on Mg(2+) as a cofactor. In terms of processing, ubiquitinated by rpm-1. Negatively regulated by ubiquitination by fsn-1 bound rpm-1, followed by degradation. Phosphorylation at Ser-874 and/or at Ser-878 abolishes interaction with isoform c and promotes binding to isoform a kinase domain (likely in trans) resulting in isoform a self-association and activation. In terms of tissue distribution, expressed in nerve ring, nerve cord, neurons, and pharynx.

The protein resides in the synapse. Its subcellular location is the cytoplasm. It localises to the cell projection. It is found in the axon. The protein localises to the dendrite. The protein resides in the cilium. It carries out the reaction L-seryl-[protein] + ATP = O-phospho-L-seryl-[protein] + ADP + H(+). The enzyme catalyses L-threonyl-[protein] + ATP = O-phospho-L-threonyl-[protein] + ADP + H(+). Its activity is regulated as follows. Inactive when associated with isoform c. Dissociation from isoform c, which is dependent on the phosphorylation of the C-terminal hexapeptide, results in self-association and activation. Transient increase in Ca(2+) levels caused by axonal injury or synaptic activity triggers the dissociation of isoform a from isoform c; the dissociation may be influenced by the phosphorylation status of the C-terminal hexapeptide. In terms of biological role, component of a MAP kinase pathway that functions presynaptically to regulate synaptic architecture and presynaptic differentiation. Phosphorylates and activates mkk-4. Has a role in axonal regrowth following injury and synaptogenesis. Plays a role in modulating polymerization of neuronal microtubules. Also promotes tubulin post-translational modifications that protect microtubules. Plays a role in cilium length regulation, possibly by reducing rab-5 mediated endocytosis, and may also have a role in intraflagellar transport in cilia. Plays a role in the formation of muscle connections, also called muscle arm extensions, between the body wall and the motor axons in the dorsal and ventral cord. Has a role in synapse and axon development, and in axonal regrowth following injury. Functionally, by forming heterooligomers with isoform a, acts as an inhibitor of isoform a activation. Its inhibitory function is independent of its catalytic activity. This Caenorhabditis elegans protein is Mitogen-activated protein kinase kinase kinase dlk-1 (dlk-1).